Reading from the N-terminus, the 633-residue chain is Protein CASP (633 aa).

The Cytoplasmic portion of the chain corresponds to 1–601 (MAVASEALLQ…LLFSRATRGL (601 aa)). The tract at residues 39-60 (QKTSLDERKELSSKTKEFRKQP) is disordered. 2 coiled-coil regions span residues 111–339 (IEAA…LANK) and 369–433 (SLES…VDVE). Residues 602–622 (FFMYLILLHLFIMIVLLKLGI) traverse the membrane as a helical; Anchor for type IV membrane protein segment. The Lumenal portion of the chain corresponds to 623–633 (AGNTAYTPMNY).

It belongs to the CASP family.

It localises to the golgi apparatus membrane. In terms of biological role, may be involved in intra-Golgi transport. This Schizosaccharomyces pombe (strain 972 / ATCC 24843) (Fission yeast) protein is Protein CASP (coy1).